The sequence spans 365 residues: Anhydro-N-acetylmuramic acid kinase (365 aa).

12 to 19 (GTSLDGID) lines the ATP pocket.

Belongs to the anhydro-N-acetylmuramic acid kinase family.

The catalysed reaction is 1,6-anhydro-N-acetyl-beta-muramate + ATP + H2O = N-acetyl-D-muramate 6-phosphate + ADP + H(+). The protein operates within amino-sugar metabolism; 1,6-anhydro-N-acetylmuramate degradation. Its pathway is cell wall biogenesis; peptidoglycan recycling. Catalyzes the specific phosphorylation of 1,6-anhydro-N-acetylmuramic acid (anhMurNAc) with the simultaneous cleavage of the 1,6-anhydro ring, generating MurNAc-6-P. Is required for the utilization of anhMurNAc either imported from the medium or derived from its own cell wall murein, and thus plays a role in cell wall recycling. The polypeptide is Anhydro-N-acetylmuramic acid kinase (Rhizorhabdus wittichii (strain DSM 6014 / CCUG 31198 / JCM 15750 / NBRC 105917 / EY 4224 / RW1) (Sphingomonas wittichii)).